A 253-amino-acid chain; its full sequence is Methionine aminopeptidase (253 aa).

Histidine 78 contributes to the substrate binding site. 3 residues coordinate a divalent metal cation: aspartate 95, aspartate 106, and histidine 169. Histidine 176 provides a ligand contact to substrate. A divalent metal cation is bound by residues glutamate 206 and glutamate 237.

Belongs to the peptidase M24A family. Methionine aminopeptidase type 1 subfamily. In terms of assembly, monomer. Requires Co(2+) as cofactor. The cofactor is Zn(2+). It depends on Mn(2+) as a cofactor. Fe(2+) is required as a cofactor.

It carries out the reaction Release of N-terminal amino acids, preferentially methionine, from peptides and arylamides.. In terms of biological role, removes the N-terminal methionine from nascent proteins. The N-terminal methionine is often cleaved when the second residue in the primary sequence is small and uncharged (Met-Ala-, Cys, Gly, Pro, Ser, Thr, or Val). Requires deformylation of the N(alpha)-formylated initiator methionine before it can be hydrolyzed. This Helicobacter pylori (strain J99 / ATCC 700824) (Campylobacter pylori J99) protein is Methionine aminopeptidase.